Reading from the N-terminus, the 939-residue chain is Translation initiation factor IF-2 (939 aa).

Disordered regions lie at residues 51 to 81 and 137 to 353; these read LGTK…GGKK and VTNK…EMKA. A compositionally biased stretch (basic and acidic residues) spans 181-210; that stretch reads NEKKAGAPEIKRAEHTETVEKSKTAVDSKK. Over residues 259–277 the composition is skewed to low complexity; the sequence is PVNRSPRPSTPSPNRSAGG. The segment covering 300-312 has biased composition (basic and acidic residues); it reads RRDEKPAERDSRP. A tr-type G domain is found at 437 to 606; it reads GRCPVVTVMG…QLAAEMLELK (170 aa). Positions 446 to 453 are G1; the sequence is GHVDHGKT. 446-453 serves as a coordination point for GTP; sequence GHVDHGKT. Residues 471 to 475 are G2; it reads GITQH. The interval 492 to 495 is G3; it reads DTPG. GTP contacts are provided by residues 492–496 and 546–549; these read DTPGH and NKID. The tract at residues 546-549 is G4; that stretch reads NKID. Positions 582–584 are G5; sequence SAK.

This sequence belongs to the TRAFAC class translation factor GTPase superfamily. Classic translation factor GTPase family. IF-2 subfamily.

The protein resides in the cytoplasm. Its function is as follows. One of the essential components for the initiation of protein synthesis. Protects formylmethionyl-tRNA from spontaneous hydrolysis and promotes its binding to the 30S ribosomal subunits. Also involved in the hydrolysis of GTP during the formation of the 70S ribosomal complex. The sequence is that of Translation initiation factor IF-2 from Desulfotalea psychrophila (strain LSv54 / DSM 12343).